The sequence spans 193 residues: Peptidyl-tRNA hydrolase (193 aa).

Residue Tyr17 participates in tRNA binding. The active-site Proton acceptor is the His22. TRNA-binding residues include Tyr69, Asn71, and Asn117.

This sequence belongs to the PTH family. Monomer.

The protein localises to the cytoplasm. It catalyses the reaction an N-acyl-L-alpha-aminoacyl-tRNA + H2O = an N-acyl-L-amino acid + a tRNA + H(+). Functionally, hydrolyzes ribosome-free peptidyl-tRNAs (with 1 or more amino acids incorporated), which drop off the ribosome during protein synthesis, or as a result of ribosome stalling. In terms of biological role, catalyzes the release of premature peptidyl moieties from peptidyl-tRNA molecules trapped in stalled 50S ribosomal subunits, and thus maintains levels of free tRNAs and 50S ribosomes. The protein is Peptidyl-tRNA hydrolase of Leifsonia xyli subsp. xyli (strain CTCB07).